Here is a 371-residue protein sequence, read N- to C-terminus: Nuclear hormone receptor family member nhr-51 (371 aa).

The segment at residues 2 to 77 is a DNA-binding region (nuclear receptor); that stretch reads NKNCLICHRK…MGMQAFPRRV (76 aa). 2 NR C4-type zinc fingers span residues 5 to 25 and 41 to 60; these read CLIC…CFAC and CQKF…CKAC. Positions 98 to 337 constitute an NR LBD domain; it reads MDEQRHWRML…KQLVTDTFVD (240 aa).

It belongs to the nuclear hormone receptor family.

The protein localises to the nucleus. Orphan nuclear receptor. In Caenorhabditis elegans, this protein is Nuclear hormone receptor family member nhr-51 (nhr-51).